We begin with the raw amino-acid sequence, 239 residues long: Purine nucleoside phosphorylase DeoD-type (239 aa).

Histidine 5 is a binding site for a purine D-ribonucleoside. Residues glycine 21, arginine 25, arginine 44, and 88 to 91 each bind phosphate; that span reads RVGS. A purine D-ribonucleoside is bound by residues 180-182 and 204-205; these read EME and SD. Aspartate 205 serves as the catalytic Proton donor.

This sequence belongs to the PNP/UDP phosphorylase family. As to quaternary structure, homohexamer; trimer of homodimers.

It carries out the reaction a purine D-ribonucleoside + phosphate = a purine nucleobase + alpha-D-ribose 1-phosphate. The enzyme catalyses a purine 2'-deoxy-D-ribonucleoside + phosphate = a purine nucleobase + 2-deoxy-alpha-D-ribose 1-phosphate. In terms of biological role, catalyzes the reversible phosphorolytic breakdown of the N-glycosidic bond in the beta-(deoxy)ribonucleoside molecules, with the formation of the corresponding free purine bases and pentose-1-phosphate. This Citrobacter koseri (strain ATCC BAA-895 / CDC 4225-83 / SGSC4696) protein is Purine nucleoside phosphorylase DeoD-type.